Consider the following 143-residue polypeptide: Probable FAD-linked sulfhydryl oxidase R368 (143 aa).

In terms of domain architecture, ERV/ALR sulfhydryl oxidase spans 10-104; it reads GWTFSHAVAL…YPEAIEAIEK (95 aa). A disulfide bond links C46 and C49. Residues 117-137 traverse the membrane as a helical segment; the sequence is FFIILIIIGIIVIIYLMYIVF.

FAD serves as cofactor.

It localises to the membrane. It carries out the reaction 2 R'C(R)SH + O2 = R'C(R)S-S(R)CR' + H2O2. FAD-dependent sulfhydryl oxidase that catalyzes disulfide bond formation. The polypeptide is Probable FAD-linked sulfhydryl oxidase R368 (Acanthamoeba polyphaga mimivirus (APMV)).